The primary structure comprises 344 residues: Flavonoid 7-O-methyltransferase 1B (344 aa).

Aspartate 211 lines the S-adenosyl-L-methionine pocket. Residue histidine 249 is the Proton acceptor of the active site.

It belongs to the class I-like SAM-binding methyltransferase superfamily. Cation-independent O-methyltransferase family. In terms of assembly, homodimer.

The catalysed reaction is scutellarein + S-adenosyl-L-methionine = scutellarein 7-methyl ether + S-adenosyl-L-homocysteine. It catalyses the reaction 4',7,8-trihydroxyflavone + S-adenosyl-L-methionine = 4',8-dihydroxy-7-methoxyflavone + S-adenosyl-L-homocysteine. It carries out the reaction isorhamnetin + S-adenosyl-L-methionine = rhamnacene + S-adenosyl-L-homocysteine + H(+). The enzyme catalyses kaempferol + S-adenosyl-L-methionine = kaempferol 7-methyl ether + S-adenosyl-L-homocysteine + H(+). The catalysed reaction is (2S)-naringenin + S-adenosyl-L-methionine = (2S)-sakuranetin + S-adenosyl-L-homocysteine + H(+). It catalyses the reaction quercetin + S-adenosyl-L-methionine = rhamnetin + S-adenosyl-L-homocysteine + H(+). It carries out the reaction apigenin + S-adenosyl-L-methionine = genkwanin + S-adenosyl-L-homocysteine + H(+). The enzyme catalyses luteolin + S-adenosyl-L-methionine = luteolin 7-methyl ether + S-adenosyl-L-homocysteine + H(+). It participates in flavonoid metabolism. In terms of biological role, flavonoid 7-O-methyltransferase involved in the biosynthesis of polymethoxylated flavonoids natural products such as pebrellin, aroma compounds which contribute to the flavor of peppermint, and exhibit pharmacological activities such as anti-allergic, anti-oxidant, antibacterial, anti-proliferative, and anti-inflammatory effects. Catalyzes S-adenosylmethionine-dependent regioselective 7-O-methylation of flavonoids; active on various hydroxylated flavonoid substrates, including luteolin (LUT), quercetin, kaempferol, isorhamnetin, apigenin (API), scutellarein (6-hydroxy-apigenin, 6-OH-API, SCU), 7,8,4'-trihydroxy-flavone and naringenin (NAR), and, with a lower efficiency, 7,8,3',4'-tetrahydroxy-flavone, taxifolin and hesperetin. In Mentha piperita (Peppermint), this protein is Flavonoid 7-O-methyltransferase 1B.